Consider the following 600-residue polypeptide: Proline--tRNA ligase (600 aa).

It belongs to the class-II aminoacyl-tRNA synthetase family. ProS type 1 subfamily. In terms of assembly, homodimer.

Its subcellular location is the cytoplasm. It carries out the reaction tRNA(Pro) + L-proline + ATP = L-prolyl-tRNA(Pro) + AMP + diphosphate. Functionally, catalyzes the attachment of proline to tRNA(Pro) in a two-step reaction: proline is first activated by ATP to form Pro-AMP and then transferred to the acceptor end of tRNA(Pro). As ProRS can inadvertently accommodate and process non-cognate amino acids such as alanine and cysteine, to avoid such errors it has two additional distinct editing activities against alanine. One activity is designated as 'pretransfer' editing and involves the tRNA(Pro)-independent hydrolysis of activated Ala-AMP. The other activity is designated 'posttransfer' editing and involves deacylation of mischarged Ala-tRNA(Pro). The misacylated Cys-tRNA(Pro) is not edited by ProRS. This chain is Proline--tRNA ligase, found in Synechococcus sp. (strain ATCC 27144 / PCC 6301 / SAUG 1402/1) (Anacystis nidulans).